The chain runs to 247 residues: GTP cyclohydrolase 1 type 2 homolog (247 aa).

A divalent metal cation contacts are provided by H63, H64, D101, H215, and E219.

This sequence belongs to the GTP cyclohydrolase I type 2/NIF3 family. Homohexamer.

This is GTP cyclohydrolase 1 type 2 homolog from Buchnera aphidicola subsp. Schizaphis graminum (strain Sg).